A 43-amino-acid chain; its full sequence is DRDSCVDKSRCAKYGYYGQCEVCCKKAGHRGGTCDFFKCKCKV.

4 disulfides stabilise this stretch: C5–C23, C11–C34, C20–C39, and C24–C41.

It belongs to the ergtoxin family. Gamma-KTx 3 subfamily. In terms of tissue distribution, expressed by the venom gland.

It localises to the secreted. In terms of biological role, blocks Kv11/ERG potassium channels. This chain is Potassium channel toxin gamma-KTx 3.3, found in Centruroides sculpturatus (Arizona bark scorpion).